Reading from the N-terminus, the 120-residue chain is Small ribosomal subunit protein uS13 (120 aa).

Positions 92 to 120 (RRGLPCRGQRTRTNARTRKGPRKPIAGKK) are disordered.

This sequence belongs to the universal ribosomal protein uS13 family. Part of the 30S ribosomal subunit. Forms a loose heterodimer with protein S19. Forms two bridges to the 50S subunit in the 70S ribosome.

Functionally, located at the top of the head of the 30S subunit, it contacts several helices of the 16S rRNA. In the 70S ribosome it contacts the 23S rRNA (bridge B1a) and protein L5 of the 50S subunit (bridge B1b), connecting the 2 subunits; these bridges are implicated in subunit movement. Contacts the tRNAs in the A and P-sites. In Laribacter hongkongensis (strain HLHK9), this protein is Small ribosomal subunit protein uS13.